The sequence spans 157 residues: Ribosomal RNA large subunit methyltransferase H (157 aa).

S-adenosyl-L-methionine contacts are provided by residues glycine 104 and 123 to 128; that span reads LSSLTL.

Belongs to the RNA methyltransferase RlmH family. Homodimer.

The protein localises to the cytoplasm. The enzyme catalyses pseudouridine(1915) in 23S rRNA + S-adenosyl-L-methionine = N(3)-methylpseudouridine(1915) in 23S rRNA + S-adenosyl-L-homocysteine + H(+). In terms of biological role, specifically methylates the pseudouridine at position 1915 (m3Psi1915) in 23S rRNA. The sequence is that of Ribosomal RNA large subunit methyltransferase H from Nitrosococcus oceani (strain ATCC 19707 / BCRC 17464 / JCM 30415 / NCIMB 11848 / C-107).